A 186-amino-acid chain; its full sequence is NADH-quinone oxidoreductase subunit B 2 (186 aa).

The tract at residues 1 to 27 (MPSFTQPHSAPRNFQFPGQQRQGDPTM) is disordered. The [4Fe-4S] cluster site is built by Cys65, Cys66, Cys130, and Cys160.

This sequence belongs to the complex I 20 kDa subunit family. In terms of assembly, NDH-1 is composed of 14 different subunits. Subunits NuoB, C, D, E, F, and G constitute the peripheral sector of the complex. [4Fe-4S] cluster serves as cofactor.

The protein localises to the cell inner membrane. It carries out the reaction a quinone + NADH + 5 H(+)(in) = a quinol + NAD(+) + 4 H(+)(out). Its function is as follows. NDH-1 shuttles electrons from NADH, via FMN and iron-sulfur (Fe-S) centers, to quinones in the respiratory chain. The immediate electron acceptor for the enzyme in this species is believed to be ubiquinone. Couples the redox reaction to proton translocation (for every two electrons transferred, four hydrogen ions are translocated across the cytoplasmic membrane), and thus conserves the redox energy in a proton gradient. The protein is NADH-quinone oxidoreductase subunit B 2 of Rhizobium etli (strain ATCC 51251 / DSM 11541 / JCM 21823 / NBRC 15573 / CFN 42).